We begin with the raw amino-acid sequence, 1838 residues long: MVSPKDLVAIVHSSLLGTSRPTPTQRIELTHAIRNSFPSLQNLLSFPPPKPSDRAQVQSKEIRLPDSLPISLDDQDIAISLKLSDELHLNEIDSVRLLVSSNQEWGLMGRDPLEIQRLATGLWYTGRRDLTSTLYTLLRAVVLDEGLEPDLIADIQGLLEELIEAGLRQRLITLIKELNREDPTGLGGPLCERYLIDSRGALVERRAVVQRERLILGHCLVLSILVDRPGSKDVKDIYYILKDNAAQLTEGNDTISSQITFSLLFSLIITFVSDAISRLSDKSSMISQDASFRTDFQDIVMASGSDPTADGFIGGIRLAWAVHLMLIHDGISGMDTISTASTTDMGHICSCLESIFSKNVFQFLLDNVLRTAAYQNDEEDIIYIYNAYLHKLASCFLSHPIARDKVKESKDMAMSVLNSYRTSDPLDGSMQTEESDRPLPFISLMEFKEPELLSGNDVLWTFVNFAGEDHTNFKTLVAFLEMLCTLASTQEGASKVYELLRGTSFRSIGWPTLFDCIRIYDEKFKQSLQTAGAMMPEFLEGDAKALVAYLNVLQKVVENGNPTERKNWFPDIEPFFKLLGYENIPPYLKGALRKTIAAFVNVFPEMRDSIWAFLEQYDLPVVVGSQVGKSDQSSQVYDMQFELNEVEARREQYPSTISFLNLINALIAGEKDVNDRGRRAYSDPCEKWQLVVACLQHFHMILSMYDIQEEDLDGFTEHPHFLVSLETSSLQTQLPIIELLKDFMSGKALYRNLMGILQVGVNSIISERLSKTYGKILEKAVQLSLEILLLVFEKDLLVSDVWRPLYQPLDIILSQDHNQIIALLEYVRYDSLPQIQRSSIKIMNILRCSRLVGLVPMLIKIDAANSLIEDYAACLEGRLEEGEVVENSCDDLGVLIMQLLVDNINRPAPSITHLLLKFDLDAPVEGTVLQPKFHYSCLKVILEMLEKLPNPDINFLLFEFGFQLLCELNLDPLTSGPTMDLLSSKKYQFFLQHLDTIGVATLPKRSGSQALRISSLHQRAWLLKLLAIALHTGSGSSSAHLEACQSILSHLFGREVTEAANEPFSSSTYPQDGLDYAGTSSISKSKALALLEILQFRSPDASMQLPQIVSSLKYDSLVEDILGNRDTSVSGSIYYYSERGDRLIDLSSFSNKLWQKLHSGFPLVDSFPNVAELSEVRETIQQLLKWGWKYNRNLEEQAAQLHMLAGWSQIVEVSACRRISSLDNRSEILYRILDASLSASASPDCSLKMAFVLTQVALTCIAKLRDDRFSFQGALSSDTVTCLDVMMVKHLSTGACHSVLFKLVMAILRHESSESLRRRQYALLLSYFQYCQHMIALDVPTSVVQFLLLNEQDGEDLDIQKIDKEQADLARANFFIIKKEAQGILDLVIKDASQGSEFGKTISLYVLEALVCIDHERYFLSQLQSRGFIRSCLGSISNISYQDGTHLLESQQRACTLEAELALLLRISHKYGKSGGQVLFSMGALEHIASCRAISFKGNMRRVDMKLQSDVGYNVQKQRTIITAVLRLVFALTSLVETSEFFEGRNKIVRDVVEFIKGHQSLFDQLLREDFTQADDLLMEQIILAVGILSKVWPFEENDGYGFVQGLFDMMSKLFIASPIKSILSQGSELKLSQLRFSLTSYLYFLVTKNSLRLQVSDDSLDSSTKLRQPTLLLLASLLSHVTDSLERAAEKKSLLLHKIRDINELSRQDVDAIIKICDSQEYVTPSDNIHKRRYIAMVEMCQIVGNRDQLITLLLQLAEHVLNIILIHLQDRSVSSNERGSYGSKSHIQQEVTDLCGKLSPTIDRLALLNEGKVGHNLKVFQRLATTVKEMAIQKCV.

Belongs to the NUP186/NUP192/NUP205 family. As to quaternary structure, part of the nuclear pore complex (NPC). The NPC has an eight-fold symmetrical structure comprising a central transport channel and two rings, the cytoplasmic and nuclear rings, to which eight filaments are attached. The cytoplasmic filaments have loose ends, while the nuclear filaments are joined in a distal ring, forming a nuclear basket. NPCs are highly dynamic in configuration and composition, and can be devided in 3 subcomplexes, the NUP62 subcomplex, the NUP107-160 subcomplex and the NUP93 subcomplex, containing approximately 30 different nucleoporin proteins.

It is found in the nucleus envelope. Its subcellular location is the nucleus. The protein localises to the nuclear pore complex. This is Nuclear pore complex protein NUP205 from Arabidopsis thaliana (Mouse-ear cress).